Here is a 203-residue protein sequence, read N- to C-terminus: A-type ATP synthase subunit E (203 aa).

Belongs to the V-ATPase E subunit family. Has multiple subunits with at least A(3), B(3), C, D, E, F, H, I and proteolipid K(x).

The protein localises to the cell membrane. Component of the A-type ATP synthase that produces ATP from ADP in the presence of a proton gradient across the membrane. This is A-type ATP synthase subunit E from Methanococcus aeolicus (strain ATCC BAA-1280 / DSM 17508 / OCM 812 / Nankai-3).